Consider the following 431-residue polypeptide: Serine hydroxymethyltransferase (431 aa).

(6S)-5,6,7,8-tetrahydrofolate contacts are provided by residues L128 and 132–134 (GHL). K237 is subject to N6-(pyridoxal phosphate)lysine.

This sequence belongs to the SHMT family. Homodimer. Requires pyridoxal 5'-phosphate as cofactor.

The protein localises to the cytoplasm. The enzyme catalyses (6R)-5,10-methylene-5,6,7,8-tetrahydrofolate + glycine + H2O = (6S)-5,6,7,8-tetrahydrofolate + L-serine. Its pathway is one-carbon metabolism; tetrahydrofolate interconversion. The protein operates within amino-acid biosynthesis; glycine biosynthesis; glycine from L-serine: step 1/1. Catalyzes the reversible interconversion of serine and glycine with tetrahydrofolate (THF) serving as the one-carbon carrier. This reaction serves as the major source of one-carbon groups required for the biosynthesis of purines, thymidylate, methionine, and other important biomolecules. Also exhibits THF-independent aldolase activity toward beta-hydroxyamino acids, producing glycine and aldehydes, via a retro-aldol mechanism. This chain is Serine hydroxymethyltransferase, found in Ruegeria sp. (strain TM1040) (Silicibacter sp.).